The chain runs to 208 residues: Large ribosomal subunit protein bL25 (208 aa).

It belongs to the bacterial ribosomal protein bL25 family. CTC subfamily. In terms of assembly, part of the 50S ribosomal subunit; part of the 5S rRNA/L5/L18/L25 subcomplex. Contacts the 5S rRNA. Binds to the 5S rRNA independently of L5 and L18.

In terms of biological role, this is one of the proteins that binds to the 5S RNA in the ribosome where it forms part of the central protuberance. The protein is Large ribosomal subunit protein bL25 of Burkholderia pseudomallei (strain K96243).